Consider the following 790-residue polypeptide: Probable copper-transporting ATPase SynA (790 aa).

Over 1-105 the chain is Cytoplasmic; that stretch reads MPAAIVHSAD…IPPLQQQRLQ (105 aa). One can recognise an HMA domain in the interval 14–81; it reads TSILVEVEGM…EITGLGFRAQ (68 aa). Positions 25 and 28 each coordinate Cu cation. The chain crosses the membrane as a helical span at residues 106–125; sequence LAIAAFLLIVSSWGHLGHWL. Residues 126–134 are Extracellular-facing; that stretch reads DHPLPGTDQ. The helical transmembrane segment at 135 to 154 threads the bilayer; that stretch reads LWFHALLAIWALLGPGRSIL. Residues 155–166 are Cytoplasmic-facing; that stretch reads QAGWQGLRCGAP. A helical membrane pass occupies residues 167–189; sequence NMNSLVLLGTGSAYLASLVALLW. Residues 190 to 193 lie on the Extracellular side of the membrane; sequence PQLG. A helical transmembrane segment spans residues 194 to 211; it reads WVCFLDEPVMLLGFILLG. Residues 212–357 lie on the Cytoplasmic side of the membrane; that stretch reads RTLEEQARFR…RKAPVQRFAD (146 aa). A helical transmembrane segment spans residues 358–380; it reads AIAGRFVYGVCAIAALTFGFWAT. The Extracellular segment spans residues 381-416; it reads LGSRWWPQVLQQPLPGLLIHAPHHGMEMAHPHSHSP. Residues 417-439 form a helical membrane-spanning segment; sequence LLLALTLAISVLVVACPCALGLA. Topologically, residues 440 to 726 are cytoplasmic; that stretch reads TPTAILVATG…QMGLRTIRQN (287 aa). Aspartate 476 acts as the 4-aspartylphosphate intermediate in catalysis. Residues aspartate 669 and aspartate 673 each contribute to the Mg(2+) site. The chain crosses the membrane as a helical span at residues 727–749; the sequence is LTWALGYNVVMLPLAAGAFLPAY. Residues 750–753 lie on the Extracellular side of the membrane; it reads GLAL. Residues 754–776 form a helical membrane-spanning segment; the sequence is TPAIAGACMAVSSLAVVSNSLLL. Over 777–790 the chain is Cytoplasmic; that stretch reads RYWFRRSLNHSVSV.

The protein belongs to the cation transport ATPase (P-type) (TC 3.A.3) family. Type IB subfamily.

It is found in the cell membrane. The enzyme catalyses Cu(2+)(in) + ATP + H2O = Cu(2+)(out) + ADP + phosphate + H(+). Involved in copper transport. The sequence is that of Probable copper-transporting ATPase SynA (synA) from Synechococcus sp. (strain ATCC 27144 / PCC 6301 / SAUG 1402/1) (Anacystis nidulans).